Here is a 157-residue protein sequence, read N- to C-terminus: MSIEVNNESGVVVDEAQLVTLSRFIFERLYIHPQAELSILLVDEPAMEKLHIELMDEPGATDVLSVPMDELTPGTPEKPTPQGMLGDIAICPQVAEVQARNAGHPTQDEMLLLTTHGILHLLGFDHAEPEEKEEMFGLQRELLSEFLGKDAPMETMQ.

The Zn(2+) site is built by His116, His120, and His126.

The protein belongs to the endoribonuclease YbeY family. The cofactor is Zn(2+).

Its subcellular location is the cytoplasm. Functionally, single strand-specific metallo-endoribonuclease involved in late-stage 70S ribosome quality control and in maturation of the 3' terminus of the 16S rRNA. The sequence is that of Endoribonuclease YbeY from Paenarthrobacter aurescens (strain TC1).